The sequence spans 395 residues: Torsin-3A (395 aa).

An N-terminal signal peptide occupies residues 1-24; sequence MFFGAFWLLLLLLLPPLRPPGAQG. N-linked (GlcNAc...) asparagine glycosylation occurs at Asn120. 165–172 contacts ATP; it reads GWSGTGKN.

The protein belongs to the ClpA/ClpB family. Torsin subfamily. In terms of assembly, may not form homohexamers. In terms of processing, N-glycosylated.

It localises to the cytoplasm. The protein localises to the endoplasmic reticulum lumen. This chain is Torsin-3A (Tor3a), found in Rattus norvegicus (Rat).